A 471-amino-acid chain; its full sequence is ATP synthase subunit beta (471 aa).

154–161 is a binding site for ATP; it reads GGAGVGKT.

Belongs to the ATPase alpha/beta chains family. In terms of assembly, F-type ATPases have 2 components, CF(1) - the catalytic core - and CF(0) - the membrane proton channel. CF(1) has five subunits: alpha(3), beta(3), gamma(1), delta(1), epsilon(1). CF(0) has three main subunits: a(1), b(2) and c(9-12). The alpha and beta chains form an alternating ring which encloses part of the gamma chain. CF(1) is attached to CF(0) by a central stalk formed by the gamma and epsilon chains, while a peripheral stalk is formed by the delta and b chains.

The protein localises to the cell membrane. The enzyme catalyses ATP + H2O + 4 H(+)(in) = ADP + phosphate + 5 H(+)(out). Produces ATP from ADP in the presence of a proton gradient across the membrane. The catalytic sites are hosted primarily by the beta subunits. The polypeptide is ATP synthase subunit beta (Mesomycoplasma hyopneumoniae (strain 232) (Mycoplasma hyopneumoniae)).